The sequence spans 258 residues: UPF0246 protein PM0066 (258 aa).

It belongs to the UPF0246 family.

This Pasteurella multocida (strain Pm70) protein is UPF0246 protein PM0066.